The following is a 78-amino-acid chain: Major outer membrane lipoprotein Lpp (78 aa).

An N-terminal signal peptide occupies residues 1-20; the sequence is MKATKLVLGAVILGSTLLAG. Cysteine 21 carries N-palmitoyl cysteine lipidation. The S-diacylglycerol cysteine moiety is linked to residue cysteine 21. 2 consecutive repeats follow at residues 24-34 and 38-48; these read NAKIDQLSSDV and NAKVDQLSNDV. Residues 27–75 adopt a coiled-coil conformation; sequence IDQLSSDVQTLNAKVDQLSNDVNAMRSDVQAAKDDAARANQRLDNMATK. Position 78 is an N6-murein peptidoglycan lysine (lysine 78).

This sequence belongs to the Lpp family. In terms of assembly, homotrimer.

It localises to the cell outer membrane. It is found in the secreted. The protein resides in the cell wall. Its function is as follows. A highly abundant outer membrane lipoprotein that controls the distance between the inner and outer membranes. The only protein known to be covalently linked to the peptidoglycan network (PGN). Also non-covalently binds the PGN. The link between the cell outer membrane and PGN contributes to maintenance of the structural and functional integrity of the cell envelope, and maintains the correct distance between the PGN and the outer membrane. This Shigella flexneri protein is Major outer membrane lipoprotein Lpp.